The primary structure comprises 75 residues: Antimicrobial peptide Meucin-49-1 (75 aa).

A signal peptide spans 1–22 (MNKKILLVIFIVTMLIVDEVNS).

The protein belongs to the non-disulfide-bridged peptide (NDBP) superfamily. Long chain multifunctional peptide (group 2) family. In terms of tissue distribution, expressed by the venom gland.

The protein resides in the secreted. Functionally, antimicrobial peptide. This Mesobuthus eupeus (Lesser Asian scorpion) protein is Antimicrobial peptide Meucin-49-1.